Reading from the N-terminus, the 686-residue chain is MSILNQAINLYKNKNYRQALSLFEKVAEIYDVSWVEANIKLCQTALNLSEEVDKLNRKAVIDIDAATKIMCSNAKAISLNEVEKNEIISKYREITAKKSERAELKEVEPIPLDWPSDLTLPPLPESTNDYVWAGKRKELDDYPRKQLIIDGLSIVIPTYNRAKILAITLACLCNQKTIYDYEVIVADDGSKENIEEIVREFESLLNIKYVRQKDYGYQLCAVRNLGLRAAKYNYVAILDCDMAPNPLWVQSYMELLAVDDNVALIGPRKYIDTSKHTYLDFLSQKSLINEIPEIITNNQVAGKVEQNKSVDWRIEHFKNTDNLRLCNTPFRFFSGGNVAFAKKWLFRAGWFDEEFTHWGGEDNEFGYRLYREGCYFRSVEGAMAYHQEPPGKENETDRAAGKNITVQLLQQKVPYFYRKKEKIESATLKRVPLVSIYIPAYNCSKYIVRCVESALNQTITDLEVCICDDGSTDDTLRILQEHYANHPRVRFISQKNKGIGSASNTAVRLCRGFYIGQLDSDDFLEPDAVELCLDEFRKDLSLACVYTTNRNIDREGNLISNGYNWPIYSREKLTSAMICHHFRMFTARAWNLTEGFNESISNAVDYDMYLKLSEVGPFKHINKICYNRVLHGENTSIKKLDIQKENHFKVVNESLSRLGIKKYKYSPLTNLNECRKYTWEKIENDL.

Residues 130–417 form a galactosaminyltransferase; A1 domain region; it reads YVWAGKRKEL…LLQQKVPYFY (288 aa). Residues P157, R161, D188, Y217, R223, and 239-240 each bind UDP-N-acetyl-alpha-D-galactosamine; that span reads DC. D241 contacts Mn(2+). Position 361–362 (361–362) interacts with UDP-N-acetyl-alpha-D-galactosamine; the sequence is ED. H386 is a Mn(2+) binding site. The segment at 418-682 is glucuronosyltransferase; A2 domain; the sequence is RKKEKIESAT…ECRKYTWEKI (265 aa). Residues Y441, D469, and 517-520 each bind UDP-alpha-D-glucuronate; that span reads QLDS. Residue D521 coordinates Mn(2+). Residues H581 and 603 to 604 each bind UDP-alpha-D-glucuronate; that span reads AV. H631 is a binding site for Mn(2+).

This sequence belongs to the glycosyltransferase 2 family. CS/HAS subfamily. Requires Mn(2+) as cofactor.

The catalysed reaction is 3-O-(beta-D-GlcA-(1-&gt;3)-beta-D-GalNAc-(1-&gt;4)-beta-D-GlcA-(1-&gt;3)-beta-D-Gal-(1-&gt;3)-beta-D-Gal-(1-&gt;4)-beta-D-Xyl)-L-seryl-[protein] + UDP-N-acetyl-alpha-D-galactosamine = 3-O-(beta-D-GalNAc-(1-&gt;4)-beta-D-GlcA-(1-&gt;3)-beta-D-GalNAc-(1-&gt;4)-beta-D-GlcA-(1-&gt;3)-beta-D-Gal-(1-&gt;3)-beta-D-Gal-(1-&gt;4)-beta-D-Xyl)-L-seryl-[protein] + UDP + H(+). The enzyme catalyses 3-O-{beta-D-GlcA-(1-&gt;3)-[beta-D-GalNAc-(1-&gt;4)-beta-D-GlcA-(1-&gt;3)](n)-beta-D-GalNAc-(1-&gt;4)-beta-D-GlcA-(1-&gt;3)-beta-D-Gal-(1-&gt;3)-beta-D-Gal-(1-&gt;4)-beta-D-Xyl}-L-seryl-[protein] + UDP-N-acetyl-alpha-D-galactosamine = 3-O-{[beta-D-GalNAc-(1-&gt;4)-beta-D-GlcA-(1-&gt;3)](n+1)-beta-D-GalNAc-(1-&gt;4)-beta-D-GlcA-(1-&gt;3)-beta-D-Gal-(1-&gt;3)-beta-D-Gal-(1-&gt;4)-beta-D-Xyl}-L-seryl-[protein] + UDP + H(+). It carries out the reaction 3-O-(beta-D-GalNAc-(1-&gt;4)-beta-D-GlcA-(1-&gt;3)-beta-D-Gal-(1-&gt;3)-beta-D-Gal-(1-&gt;4)-beta-D-Xyl)-L-seryl-[protein] + UDP-alpha-D-glucuronate = 3-O-(beta-D-GlcA-(1-&gt;3)-beta-D-GalNAc-(1-&gt;4)-beta-D-GlcA-(1-&gt;3)-beta-D-Gal-(1-&gt;3)-beta-D-Gal-(1-&gt;4)-beta-D-Xyl)-L-seryl-[protein] + UDP + H(+). It catalyses the reaction 3-O-{[beta-D-GalNAc-(1-&gt;4)-beta-D-GlcA-(1-&gt;3)](n)-beta-D-GalNAc-(1-&gt;4)-beta-D-GlcA-(1-&gt;3)-beta-D-Gal-(1-&gt;3)-beta-D-Gal-(1-&gt;4)-beta-D-Xyl}-L-seryl-[protein] + UDP-alpha-D-glucuronate = 3-O-{beta-D-GlcA-(1-&gt;3)-[beta-D-GalNAc-(1-&gt;4)-beta-D-GlcA-(1-&gt;3)](n)-beta-D-GalNAc-(1-&gt;4)-beta-D-GlcA-(1-&gt;3)-beta-D-Gal-(1-&gt;3)-beta-D-Gal-(1-&gt;4)-beta-D-Xyl}-L-seryl-[protein] + UDP + H(+). Glycosyltransferase that catalyzes elongation of chondroitin, a polysaccharide composed of a repeating disaccharide of N-acetylgalactosamine (GalNAc) and glucuronic acid (GlcUA) units, by alternatively transferring the GlcUA and GalNAc moiety from UDP-GlcUA and UDP-GalNAc to the non-reducing ends of the chondroitin chain. Each chondroitin unit has the composition beta-(1-&gt;4)-GlcUA-beta-(1-&gt;3)-GalNAc. This chain is Chondroitin synthase (kfoC), found in Escherichia coli.